The following is a 390-amino-acid chain: DNA primase small subunit PriS (390 aa).

Catalysis depends on residues aspartate 98, aspartate 100, and aspartate 296.

Belongs to the eukaryotic-type primase small subunit family. As to quaternary structure, heterodimer of a small subunit (PriS) and a large subunit (PriL). Requires Mg(2+) as cofactor. The cofactor is Mn(2+).

Catalytic subunit of DNA primase, an RNA polymerase that catalyzes the synthesis of short RNA molecules used as primers for DNA polymerase during DNA replication. The small subunit contains the primase catalytic core and has DNA synthesis activity on its own. Binding to the large subunit stabilizes and modulates the activity, increasing the rate of DNA synthesis while decreasing the length of the DNA fragments, and conferring RNA synthesis capability. The DNA polymerase activity may enable DNA primase to also catalyze primer extension after primer synthesis. May also play a role in DNA repair. This chain is DNA primase small subunit PriS, found in Methanococcoides burtonii (strain DSM 6242 / NBRC 107633 / OCM 468 / ACE-M).